Reading from the N-terminus, the 263-residue chain is Hydroxyethylthiazole kinase (263 aa).

Residue M39 coordinates substrate. Positions 115 and 160 each coordinate ATP. G187 serves as a coordination point for substrate.

It belongs to the Thz kinase family. The cofactor is Mg(2+).

It carries out the reaction 5-(2-hydroxyethyl)-4-methylthiazole + ATP = 4-methyl-5-(2-phosphooxyethyl)-thiazole + ADP + H(+). It functions in the pathway cofactor biosynthesis; thiamine diphosphate biosynthesis; 4-methyl-5-(2-phosphoethyl)-thiazole from 5-(2-hydroxyethyl)-4-methylthiazole: step 1/1. Catalyzes the phosphorylation of the hydroxyl group of 4-methyl-5-beta-hydroxyethylthiazole (THZ). The protein is Hydroxyethylthiazole kinase of Staphylococcus aureus (strain bovine RF122 / ET3-1).